The sequence spans 551 residues: Calcium-dependent protein kinase 19 (551 aa).

G2 carries the N-myristoyl glycine lipid modification. The interval 12–46 (VKKPTPDISGEQNTEVKSREITPKEQPRQRQPAPR) is disordered. Basic and acidic residues predominate over residues 25–39 (TEVKSREITPKEQPR). One can recognise a Protein kinase domain in the interval 98-357 (YSLGRELGRG…AAQVLEHPWI (260 aa)). ATP contacts are provided by residues 104-112 (LGRGQFGIT) and K127. D222 (proton acceptor) is an active-site residue. A Phosphoserine modification is found at S263. The segment at 363-393 (ASDKPIDSAVLSRMKQLRAMNKLKKLAFKFI) is autoinhibitory domain. EF-hand domains follow at residues 400–435 (EELK…LGSR), 436–471 (LTET…RFRV), 472–507 (ERED…YNMG), and 512–542 (IKEI…CSQS). Ca(2+)-binding residues include D413, D415, S417, T419, E424, D449, D451, N453, T455, E460, D485, D487, S489, E496, D520, D522, D524, S526, and E531.

This sequence belongs to the protein kinase superfamily. Ser/Thr protein kinase family. CDPK subfamily.

Its subcellular location is the membrane. The catalysed reaction is L-seryl-[protein] + ATP = O-phospho-L-seryl-[protein] + ADP + H(+). It carries out the reaction L-threonyl-[protein] + ATP = O-phospho-L-threonyl-[protein] + ADP + H(+). Its activity is regulated as follows. Activated by calcium. Autophosphorylation may play an important role in the regulation of the kinase activity. May play a role in signal transduction pathways that involve calcium as a second messenger. In Arabidopsis thaliana (Mouse-ear cress), this protein is Calcium-dependent protein kinase 19 (CPK19).